Reading from the N-terminus, the 486-residue chain is Siroheme synthase (486 aa).

The precorrin-2 dehydrogenase /sirohydrochlorin ferrochelatase stretch occupies residues 1–203; the sequence is MNYFPIFANL…RQNTLAEREL (203 aa). Residues 22–23 and 43–44 contribute to the NAD(+) site; these read AV and KH. Position 128 is a phosphoserine (S128). Residues 217-486 form a uroporphyrinogen-III C-methyltransferase region; the sequence is GSVSLVGAGP…LGTGQEQQAA (270 aa). Position 226 (P226) interacts with S-adenosyl-L-methionine. D249 serves as the catalytic Proton acceptor. K271 serves as the catalytic Proton donor. S-adenosyl-L-methionine contacts are provided by residues 302-304, V307, 332-333, M384, and G413; these read GGD and TA.

The protein in the N-terminal section; belongs to the precorrin-2 dehydrogenase / sirohydrochlorin ferrochelatase family. It in the C-terminal section; belongs to the precorrin methyltransferase family.

The catalysed reaction is uroporphyrinogen III + 2 S-adenosyl-L-methionine = precorrin-2 + 2 S-adenosyl-L-homocysteine + H(+). It carries out the reaction precorrin-2 + NAD(+) = sirohydrochlorin + NADH + 2 H(+). It catalyses the reaction siroheme + 2 H(+) = sirohydrochlorin + Fe(2+). It functions in the pathway cofactor biosynthesis; adenosylcobalamin biosynthesis; precorrin-2 from uroporphyrinogen III: step 1/1. It participates in cofactor biosynthesis; adenosylcobalamin biosynthesis; sirohydrochlorin from precorrin-2: step 1/1. The protein operates within porphyrin-containing compound metabolism; siroheme biosynthesis; precorrin-2 from uroporphyrinogen III: step 1/1. Its pathway is porphyrin-containing compound metabolism; siroheme biosynthesis; siroheme from sirohydrochlorin: step 1/1. It functions in the pathway porphyrin-containing compound metabolism; siroheme biosynthesis; sirohydrochlorin from precorrin-2: step 1/1. Its function is as follows. Multifunctional enzyme that catalyzes the SAM-dependent methylations of uroporphyrinogen III at position C-2 and C-7 to form precorrin-2 via precorrin-1. Then it catalyzes the NAD-dependent ring dehydrogenation of precorrin-2 to yield sirohydrochlorin. Finally, it catalyzes the ferrochelation of sirohydrochlorin to yield siroheme. This is Siroheme synthase from Neisseria meningitidis serogroup A / serotype 4A (strain DSM 15465 / Z2491).